The chain runs to 191 residues: Retinin (191 aa).

Residues 1–21 (MSRLFLPVLAIVLVSIGASHT) form the signal peptide. Residues 52–88 (LADGSSGSVSSSAAQPEDQSQEEAEEQQVSSASSGSA) are disordered. Low complexity-rich tracts occupy residues 55 to 69 (GSSGSVSSSAAQPED) and 78 to 88 (QQVSSASSGSA).

Phosphorylated. In terms of tissue distribution, specifically expressed in cornea (at protein level). Detected in retina and cortex.

Its subcellular location is the secreted. The chain is Retinin from Drosophila melanogaster (Fruit fly).